We begin with the raw amino-acid sequence, 298 residues long: Bifunctional protein FolD (298 aa).

Residues 166-168, Ser-191, and Ile-232 each bind NADP(+); that span reads GRS.

Belongs to the tetrahydrofolate dehydrogenase/cyclohydrolase family. In terms of assembly, homodimer.

It catalyses the reaction (6R)-5,10-methylene-5,6,7,8-tetrahydrofolate + NADP(+) = (6R)-5,10-methenyltetrahydrofolate + NADPH. The catalysed reaction is (6R)-5,10-methenyltetrahydrofolate + H2O = (6R)-10-formyltetrahydrofolate + H(+). It participates in one-carbon metabolism; tetrahydrofolate interconversion. Catalyzes the oxidation of 5,10-methylenetetrahydrofolate to 5,10-methenyltetrahydrofolate and then the hydrolysis of 5,10-methenyltetrahydrofolate to 10-formyltetrahydrofolate. This Maricaulis maris (strain MCS10) (Caulobacter maris) protein is Bifunctional protein FolD.